The chain runs to 194 residues: Cysteine and glycine-rich protein 2 (194 aa).

In terms of domain architecture, LIM zinc-binding 1 spans 10-61 (CGACGRTVYHAEEVQCDGRSFHRCCFLCMVCRKNLDSTTVAIHDAEVYCKSC). A Nuclear localization signal motif is present at residues 64–69 (KKYGPK). Residues 85–110 (GERLGIKPESSPSPHRPTTNPNTSKF) are disordered. Polar residues predominate over residues 94–110 (SSPSPHRPTTNPNTSKF). In terms of domain architecture, LIM zinc-binding 2 spans 120-171 (CSRCGDSVYAAEKVIGAGKPWHKNCFRCAKCGKSLESTTLTEKEGEIYCKGC).

It is found in the nucleus. Its function is as follows. Interacts with zyxin. May be a component of a signal transduction pathway that mediates adhesion-stimulated changes in gene expression. Totally down-regulated in transformed cells. The protein is Cysteine and glycine-rich protein 2 (CSRP2) of Coturnix japonica (Japanese quail).